The sequence spans 401 residues: Formate-dependent phosphoribosylglycinamide formyltransferase (401 aa).

N(1)-(5-phospho-beta-D-ribosyl)glycinamide is bound by residues 22–23 (EL) and Glu-82. ATP-binding positions include Arg-115, Lys-157, 162–167 (SSGKGQ), 197–200 (EGFV), and Glu-205. The ATP-grasp domain occupies 120–315 (RLAAETLALP…EFELHARAIL (196 aa)). Mg(2+)-binding residues include Glu-274 and Glu-286. Residues Asp-293, Lys-362, and 369–370 (RR) each bind N(1)-(5-phospho-beta-D-ribosyl)glycinamide.

The protein belongs to the PurK/PurT family. Homodimer.

The enzyme catalyses N(1)-(5-phospho-beta-D-ribosyl)glycinamide + formate + ATP = N(2)-formyl-N(1)-(5-phospho-beta-D-ribosyl)glycinamide + ADP + phosphate + H(+). The protein operates within purine metabolism; IMP biosynthesis via de novo pathway; N(2)-formyl-N(1)-(5-phospho-D-ribosyl)glycinamide from N(1)-(5-phospho-D-ribosyl)glycinamide (formate route): step 1/1. Its function is as follows. Involved in the de novo purine biosynthesis. Catalyzes the transfer of formate to 5-phospho-ribosyl-glycinamide (GAR), producing 5-phospho-ribosyl-N-formylglycinamide (FGAR). Formate is provided by PurU via hydrolysis of 10-formyl-tetrahydrofolate. This is Formate-dependent phosphoribosylglycinamide formyltransferase from Polaromonas naphthalenivorans (strain CJ2).